The primary structure comprises 416 residues: Imidazolonepropionase (416 aa).

2 residues coordinate Fe(3+): His78 and His80. The Zn(2+) site is built by His78 and His80. Residues Arg87, Tyr150, and His183 each contribute to the 4-imidazolone-5-propanoate site. Residue Tyr150 participates in N-formimidoyl-L-glutamate binding. Residue His248 participates in Fe(3+) binding. His248 is a Zn(2+) binding site. Position 251 (Gln251) interacts with 4-imidazolone-5-propanoate. Asp323 is a Fe(3+) binding site. Asp323 contributes to the Zn(2+) binding site. N-formimidoyl-L-glutamate contacts are provided by Asn325 and Gly327. Thr328 is a 4-imidazolone-5-propanoate binding site.

Belongs to the metallo-dependent hydrolases superfamily. HutI family. The cofactor is Zn(2+). Fe(3+) serves as cofactor.

It is found in the cytoplasm. The enzyme catalyses 4-imidazolone-5-propanoate + H2O = N-formimidoyl-L-glutamate. The protein operates within amino-acid degradation; L-histidine degradation into L-glutamate; N-formimidoyl-L-glutamate from L-histidine: step 3/3. In terms of biological role, catalyzes the hydrolytic cleavage of the carbon-nitrogen bond in imidazolone-5-propanoate to yield N-formimidoyl-L-glutamate. It is the third step in the universal histidine degradation pathway. This chain is Imidazolonepropionase, found in Vibrio parahaemolyticus serotype O3:K6 (strain RIMD 2210633).